The following is a 767-amino-acid chain: Cilium assembly protein DZIP1L (767 aa).

The disordered stretch occupies residues 122-144 (QQRGQQELGRQADELKGVREESR). Residues 131–144 (RQADELKGVREESR) are compositionally biased toward basic and acidic residues. Residues 166 to 189 (HTCHLCDKTFMNATFLRGHIQRRH) form a C2H2-type zinc finger. Residues 205–406 (VEEVLEELRA…SQEEMIQSLS (202 aa)) are a coiled coil. The residue at position 426 (Ser426) is a Phosphoserine. The disordered stretch occupies residues 518–767 (SRAKERQENG…SSGQPRVPAW (250 aa)). 2 stretches are compositionally biased toward polar residues: residues 533 to 547 (PDGQ…STLV) and 574 to 588 (RQSH…TQVS). Residues 607 to 616 (GPGMSTPPFS) show a composition bias toward low complexity. Polar residues predominate over residues 658 to 675 (ENAQPPGQGSGTLVQSMV). Residues 677–686 (NLEKQLEAPA) are compositionally biased toward basic and acidic residues.

The protein belongs to the DZIP C2H2-type zinc-finger protein family. In terms of assembly, interacts with SEPTIN2.

The protein localises to the cytoplasm. Its subcellular location is the cytoskeleton. The protein resides in the cilium basal body. It is found in the microtubule organizing center. It localises to the centrosome. The protein localises to the centriole. Its function is as follows. Involved in primary cilium formation. Probably acts as a transition zone protein required for localization of PKD1/PC1 and PKD2/PC2 to the ciliary membrane. This is Cilium assembly protein DZIP1L from Homo sapiens (Human).